Consider the following 248-residue polypeptide: Probable transcriptional regulatory protein Avi_3631 (248 aa).

It belongs to the TACO1 family.

It is found in the cytoplasm. This is Probable transcriptional regulatory protein Avi_3631 from Allorhizobium ampelinum (strain ATCC BAA-846 / DSM 112012 / S4) (Agrobacterium vitis (strain S4)).